We begin with the raw amino-acid sequence, 82 residues long: Beta-defensin 113 (82 aa).

An N-terminal signal peptide occupies residues 1-16; sequence MKILCIFLTFFFTVSC. 3 cysteine pairs are disulfide-bonded: C35/C61, C42/C56, and C46/C62.

The protein belongs to the beta-defensin family.

The protein resides in the secreted. Its function is as follows. Has antibacterial activity. The chain is Beta-defensin 113 (DEFB113) from Pan troglodytes (Chimpanzee).